Reading from the N-terminus, the 569-residue chain is 5'-AMP-activated protein kinase subunit gamma-2 (569 aa).

The disordered stretch occupies residues 1–222 (MGSAVMDTKK…TRPPLASPTH (222 aa)). Phosphoserine occurs at positions 65, 71, 73, 90, 138, 143, 161, and 162. Residues 156–167 (TSGLSSSPSTPT) show a composition bias toward low complexity. Thr165 carries the post-translational modification Phosphothreonine. A compositionally biased stretch (basic and acidic residues) spans 179–189 (SYKHEPERLEN). Residues 192 to 212 (YASSSPPDTGQRFCPSSFQSP) are compositionally biased toward polar residues. At Ser196 the chain carries Phosphoserine. 3 CBS domains span residues 275-335 (PTSS…KSPM), 357-415 (TFKP…MSDM), and 430-492 (IGTY…NLDI). Residues Arg302, 317–322 (MLTITD), Val362, 383–384 (HR), and Lys402 contribute to the ADP site. AMP contacts are provided by residues Arg302, 317–322 (MLTITD), Val362, His383, 383–384 (HR), Lys402, Thr432, Ala437, 458–459 (SA), 474–477 (SKFD), Arg501, His530, 530–531 (HR), and 546–549 (SLSD). Residues Arg302, 317-322 (MLTITD), Val362, 383-384 (HR), Arg384, and Lys402 contribute to the ATP site. Positions 370 to 391 (LFDAVYSLIKNKIHRLPVIDPI) match the AMPK pseudosubstrate motif. Residues 474–477 (SKFD), Arg501, and 530–531 (HR) contribute to the ADP site. ATP is bound by residues 474–477 (SKFD), Arg501, and 530–531 (HR). The CBS 4 domain maps to 504–562 (YFEGVVKCNKLEILETIVDRIVRAEVHRLVVVNEADSIVGIISLSDILQALILTPAGAK).

Belongs to the 5'-AMP-activated protein kinase gamma subunit family. AMPK is a heterotrimer of an alpha catalytic subunit (PRKAA1 or PRKAA2), a beta (PRKAB1 or PRKAB2) and a gamma non-catalytic subunits (PRKAG1, PRKAG2 or PRKAG3). Interacts with FNIP1 and FNIP2. Post-translationally, phosphorylated by ULK1; leading to negatively regulate AMPK activity and suggesting the existence of a regulatory feedback loop between ULK1 and AMPK. Glycosylated; O-GlcNAcylated by OGT, promoting the AMP-activated protein kinase (AMPK) activity. In terms of tissue distribution, isoform B is ubiquitously expressed except in liver and thymus. The highest level is detected in heart with abundant expression in placenta and testis.

In terms of biological role, AMP/ATP-binding subunit of AMP-activated protein kinase (AMPK), an energy sensor protein kinase that plays a key role in regulating cellular energy metabolism. In response to reduction of intracellular ATP levels, AMPK activates energy-producing pathways and inhibits energy-consuming processes: inhibits protein, carbohydrate and lipid biosynthesis, as well as cell growth and proliferation. AMPK acts via direct phosphorylation of metabolic enzymes, and by longer-term effects via phosphorylation of transcription regulators. Also acts as a regulator of cellular polarity by remodeling the actin cytoskeleton; probably by indirectly activating myosin. Gamma non-catalytic subunit mediates binding to AMP, ADP and ATP, leading to activate or inhibit AMPK: AMP-binding results in allosteric activation of alpha catalytic subunit (PRKAA1 or PRKAA2) both by inducing phosphorylation and preventing dephosphorylation of catalytic subunits. ADP also stimulates phosphorylation, without stimulating already phosphorylated catalytic subunit. ATP promotes dephosphorylation of catalytic subunit, rendering the AMPK enzyme inactive. The sequence is that of 5'-AMP-activated protein kinase subunit gamma-2 (PRKAG2) from Homo sapiens (Human).